The chain runs to 498 residues: ATP synthase subunit beta, chloroplastic (498 aa).

Residue 172 to 179 coordinates ATP; it reads GGAGVGKT.

It belongs to the ATPase alpha/beta chains family. As to quaternary structure, F-type ATPases have 2 components, CF(1) - the catalytic core - and CF(0) - the membrane proton channel. CF(1) has five subunits: alpha(3), beta(3), gamma(1), delta(1), epsilon(1). CF(0) has four main subunits: a(1), b(1), b'(1) and c(9-12).

It localises to the plastid. The protein localises to the chloroplast thylakoid membrane. It catalyses the reaction ATP + H2O + 4 H(+)(in) = ADP + phosphate + 5 H(+)(out). Produces ATP from ADP in the presence of a proton gradient across the membrane. The catalytic sites are hosted primarily by the beta subunits. This Drimys granadensis protein is ATP synthase subunit beta, chloroplastic.